Here is a 182-residue protein sequence, read N- to C-terminus: Crossover junction endodeoxyribonuclease RuvC (182 aa).

Active-site residues include aspartate 7, glutamate 69, and aspartate 141. Positions 7, 69, and 141 each coordinate Mg(2+).

The protein belongs to the RuvC family. Homodimer which binds Holliday junction (HJ) DNA. The HJ becomes 2-fold symmetrical on binding to RuvC with unstacked arms; it has a different conformation from HJ DNA in complex with RuvA. In the full resolvosome a probable DNA-RuvA(4)-RuvB(12)-RuvC(2) complex forms which resolves the HJ. Mg(2+) is required as a cofactor.

The protein resides in the cytoplasm. The enzyme catalyses Endonucleolytic cleavage at a junction such as a reciprocal single-stranded crossover between two homologous DNA duplexes (Holliday junction).. Functionally, the RuvA-RuvB-RuvC complex processes Holliday junction (HJ) DNA during genetic recombination and DNA repair. Endonuclease that resolves HJ intermediates. Cleaves cruciform DNA by making single-stranded nicks across the HJ at symmetrical positions within the homologous arms, yielding a 5'-phosphate and a 3'-hydroxyl group; requires a central core of homology in the junction. The consensus cleavage sequence is 5'-(A/T)TT(C/G)-3'. Cleavage occurs on the 3'-side of the TT dinucleotide at the point of strand exchange. HJ branch migration catalyzed by RuvA-RuvB allows RuvC to scan DNA until it finds its consensus sequence, where it cleaves and resolves the cruciform DNA. This chain is Crossover junction endodeoxyribonuclease RuvC, found in Delftia acidovorans (strain DSM 14801 / SPH-1).